We begin with the raw amino-acid sequence, 101 residues long: Urease subunit gamma (101 aa).

It belongs to the urease gamma subunit family. As to quaternary structure, heterotrimer of UreA (gamma), UreB (beta) and UreC (alpha) subunits. Three heterotrimers associate to form the active enzyme.

It is found in the cytoplasm. The catalysed reaction is urea + 2 H2O + H(+) = hydrogencarbonate + 2 NH4(+). It functions in the pathway nitrogen metabolism; urea degradation; CO(2) and NH(3) from urea (urease route): step 1/1. This chain is Urease subunit gamma, found in Ureaplasma urealyticum serovar 10 (strain ATCC 33699 / Western).